The sequence spans 197 residues: Transcription factor FapR (197 aa).

Belongs to the FapR family.

Functionally, transcriptional factor involved in regulation of membrane lipid biosynthesis by repressing genes involved in fatty acid and phospholipid metabolism. This chain is Transcription factor FapR, found in Bacillus cereus (strain 03BB102).